Here is a 317-residue protein sequence, read N- to C-terminus: Uridylate kinase (317 aa).

9–12 (KISG) contacts ATP. Gly49 is a binding site for UMP. Gly50 and Arg54 together coordinate ATP. Residues Asp69 and 130–137 (TGRPYFTT) each bind UMP. Asn158, Tyr164, and Asp167 together coordinate ATP.

The protein belongs to the UMP kinase family. As to quaternary structure, homohexamer.

The protein localises to the cytoplasm. It carries out the reaction UMP + ATP = UDP + ADP. It functions in the pathway pyrimidine metabolism; CTP biosynthesis via de novo pathway; UDP from UMP (UMPK route): step 1/1. Its activity is regulated as follows. Inhibited by UTP. Its function is as follows. Catalyzes the reversible phosphorylation of UMP to UDP. The protein is Uridylate kinase of Malacoplasma penetrans (strain HF-2) (Mycoplasma penetrans).